The following is a 171-amino-acid chain: Mitochondrial import inner membrane translocase subunit Tim17-A (171 aa).

Cys-9 and Cys-78 are oxidised to a cystine. Helical transmembrane passes span 17-37, 63-77, and 113-133; these read CGGA…FKGF, GGSF…STID, and VGSA…GILL. A disordered region spans residues 147–171; that stretch reads FAEDHSQLPSSQLPSSPFGDYRQYQ. A compositionally biased stretch (low complexity) spans 153-163; it reads QLPSSQLPSSP.

Belongs to the Tim17/Tim22/Tim23 family. Component of the TIM23 complex at least composed of TIMM23, TIMM17 (TIMM17A or TIMM17B) and TIMM50. The complex interacts with the TIMM44 component of the PAM complex and with DNAJC15. In terms of processing, degraded by YMEL1 downstream of the integrated stress response (ISR).

The protein localises to the mitochondrion inner membrane. In terms of biological role, essential component of the TIM23 complex, a complex that mediates the translocation of transit peptide-containing proteins across the mitochondrial inner membrane. The chain is Mitochondrial import inner membrane translocase subunit Tim17-A (Timm17a) from Rattus norvegicus (Rat).